The primary structure comprises 200 residues: Signal peptidase complex catalytic subunit SEC11 (200 aa).

The Cytoplasmic portion of the chain corresponds to 1–15 (MFAELAPYLSNPRQT). The chain crosses the membrane as a helical; Signal-anchor for type II membrane protein span at residues 16–33 (LAQLLNFALVLSTAFMGW). At 34–200 (KALSVYTNSS…MGVMVMLQRE (167 aa)) the chain is on the lumenal side. An N-linked (GlcNAc...) asparagine glycan is attached at N41. Active-site charge relay system residues include S53 and H92. The disordered stretch occupies residues 101 to 134 (GDGGKKSQRRLEREADKRSGPGLSSPVSHQMLTK). A compositionally biased stretch (basic and acidic residues) spans 103–119 (GGKKSQRRLEREADKRS). D142 acts as the Charge relay system in catalysis. Residues 186-197 (VLLGIMGVMVML) are C-terminal short (CTS) helix.

This sequence belongs to the peptidase S26B family. In terms of assembly, component of the signal peptidase complex (SPC) composed of a catalytic subunit SEC11 and three accessory subunits SPC1, SPC2 and SPC3. The complex induces a local thinning of the ER membrane which is used to measure the length of the signal peptide (SP) h-region of protein substrates. This ensures the selectivity of the complex towards h-regions shorter than 18-20 amino acids. SPC associates with the translocon complex.

The protein resides in the endoplasmic reticulum membrane. It catalyses the reaction Cleavage of hydrophobic, N-terminal signal or leader sequences from secreted and periplasmic proteins.. Its function is as follows. Catalytic component of the signal peptidase complex (SPC) which catalyzes the cleavage of N-terminal signal sequences from nascent proteins as they are translocated into the lumen of the endoplasmic reticulum. Specifically cleaves N-terminal signal peptides that contain a hydrophobic alpha-helix (h-region) shorter than 18-20 amino acids. The polypeptide is Signal peptidase complex catalytic subunit SEC11 (SEC11) (Arthroderma benhamiae (strain ATCC MYA-4681 / CBS 112371) (Trichophyton mentagrophytes)).